We begin with the raw amino-acid sequence, 441 residues long: ATP-dependent protease ATPase subunit HslU (441 aa).

Residues Ile-18, 60–65, Asp-254, Glu-319, and Arg-391 contribute to the ATP site; that span reads GVGKTE.

Belongs to the ClpX chaperone family. HslU subfamily. A double ring-shaped homohexamer of HslV is capped on each side by a ring-shaped HslU homohexamer. The assembly of the HslU/HslV complex is dependent on binding of ATP.

The protein resides in the cytoplasm. In terms of biological role, ATPase subunit of a proteasome-like degradation complex; this subunit has chaperone activity. The binding of ATP and its subsequent hydrolysis by HslU are essential for unfolding of protein substrates subsequently hydrolyzed by HslV. HslU recognizes the N-terminal part of its protein substrates and unfolds these before they are guided to HslV for hydrolysis. This chain is ATP-dependent protease ATPase subunit HslU, found in Actinobacillus succinogenes (strain ATCC 55618 / DSM 22257 / CCUG 43843 / 130Z).